Here is a 322-residue protein sequence, read N- to C-terminus: HPr kinase/phosphorylase (322 aa).

Residues His153 and Lys174 contribute to the active site. 168 to 175 (GRSGLGKS) contacts ATP. Ser175 serves as a coordination point for Mg(2+). The active-site Proton acceptor; for phosphorylation activity. Proton donor; for dephosphorylation activity is Asp192. Positions 217–226 (MEIRGLGVVD) are important for the catalytic mechanism of both phosphorylation and dephosphorylation. Position 218 (Glu218) interacts with Mg(2+). The active site involves Arg259. An important for the catalytic mechanism of dephosphorylation region spans residues 280–285 (PIFPGK).

It belongs to the HPrK/P family. Homohexamer. It depends on Mg(2+) as a cofactor.

The enzyme catalyses [HPr protein]-L-serine + ATP = [HPr protein]-O-phospho-L-serine + ADP + H(+). It carries out the reaction [HPr protein]-O-phospho-L-serine + phosphate + H(+) = [HPr protein]-L-serine + diphosphate. Catalyzes the ATP- as well as the pyrophosphate-dependent phosphorylation of a specific serine residue in HPr, a phosphocarrier protein of the phosphoenolpyruvate-dependent sugar phosphotransferase system (PTS). HprK/P also catalyzes the pyrophosphate-producing, inorganic phosphate-dependent dephosphorylation (phosphorolysis) of seryl-phosphorylated HPr (P-Ser-HPr). This Chlorobium phaeobacteroides (strain DSM 266 / SMG 266 / 2430) protein is HPr kinase/phosphorylase.